A 222-amino-acid chain; its full sequence is 2-C-methyl-D-erythritol 4-phosphate cytidylyltransferase (222 aa).

The protein belongs to the IspD/TarI cytidylyltransferase family. IspD subfamily.

The enzyme catalyses 2-C-methyl-D-erythritol 4-phosphate + CTP + H(+) = 4-CDP-2-C-methyl-D-erythritol + diphosphate. It functions in the pathway isoprenoid biosynthesis; isopentenyl diphosphate biosynthesis via DXP pathway; isopentenyl diphosphate from 1-deoxy-D-xylulose 5-phosphate: step 2/6. Functionally, catalyzes the formation of 4-diphosphocytidyl-2-C-methyl-D-erythritol from CTP and 2-C-methyl-D-erythritol 4-phosphate (MEP). In Thermotoga sp. (strain RQ2), this protein is 2-C-methyl-D-erythritol 4-phosphate cytidylyltransferase.